A 70-amino-acid polypeptide reads, in one-letter code: Putative RNA-binding protein YbcJ (70 aa).

An S4 RNA-binding domain is found at 12-68; that stretch reads VELCDLLKLEGWSESGAQAKIAIAEGQVKVDGAVETRKRCKIVAGQTVSFAGHSVQV.

In pull-down experiments interacts with CedA.

In terms of biological role, its structure and the presence of conserved basic residues indicates that it probably binds RNA. In Escherichia coli (strain K12), this protein is Putative RNA-binding protein YbcJ (ybcJ).